The following is a 283-amino-acid chain: MKLKLKFLLISLLGSSLLLSACSSAATQVISSLSSAQKYFESSQGELNKKNVIKILKEGYESDANKAVHALLAGWKYTLMDQQLLSKEVDSRFIKAFGSGRDKGDVTPSVSEKGLYLNETYTGFSSQIAKVLGVQSQTVKQFNYKWSSNSDFKVQIQISMKGKVGSDSESQQLIKSFLSSDNNGSNQNGGVKETDFNGDSANFDGFFTFTYTPPTQSRKFGATSFDPLTTKINFPADLQIDVSTTHQKLNTLMEANEQVKQIKSRKFTGKTFDLLPFFYYALL.

The first 21 residues, 1-21 (MKLKLKFLLISLLGSSLLLSA), serve as a signal peptide directing secretion. Cysteine 22 carries N-palmitoyl cysteine lipidation. Cysteine 22 carries S-diacylglycerol cysteine lipidation.

Belongs to the MG439/MG440 family.

Its subcellular location is the cell membrane. This is an uncharacterized protein from Mycoplasma pneumoniae (strain ATCC 29342 / M129 / Subtype 1) (Mycoplasmoides pneumoniae).